A 345-amino-acid chain; its full sequence is uncharacterized protein (345 aa).

Belongs to the proline racemase family.

This is an uncharacterized protein from Bacillus anthracis.